The primary structure comprises 411 residues: Multifunctional CCA protein (411 aa).

Residues Gly-8 and Arg-11 each coordinate ATP. CTP-binding residues include Gly-8 and Arg-11. Positions 21 and 23 each coordinate Mg(2+). Residues Arg-91, Arg-137, and Arg-140 each coordinate ATP. 3 residues coordinate CTP: Arg-91, Arg-137, and Arg-140. The HD domain maps to 228 to 329 (TGVHALLALE…LKTLLALDGL (102 aa)).

It belongs to the tRNA nucleotidyltransferase/poly(A) polymerase family. Bacterial CCA-adding enzyme type 1 subfamily. In terms of assembly, monomer. Can also form homodimers and oligomers. The cofactor is Mg(2+). It depends on Ni(2+) as a cofactor.

The enzyme catalyses a tRNA precursor + 2 CTP + ATP = a tRNA with a 3' CCA end + 3 diphosphate. It carries out the reaction a tRNA with a 3' CCA end + 2 CTP + ATP = a tRNA with a 3' CCACCA end + 3 diphosphate. Functionally, catalyzes the addition and repair of the essential 3'-terminal CCA sequence in tRNAs without using a nucleic acid template. Adds these three nucleotides in the order of C, C, and A to the tRNA nucleotide-73, using CTP and ATP as substrates and producing inorganic pyrophosphate. tRNA 3'-terminal CCA addition is required both for tRNA processing and repair. Also involved in tRNA surveillance by mediating tandem CCA addition to generate a CCACCA at the 3' terminus of unstable tRNAs. While stable tRNAs receive only 3'-terminal CCA, unstable tRNAs are marked with CCACCA and rapidly degraded. This chain is Multifunctional CCA protein, found in Teredinibacter turnerae (strain ATCC 39867 / T7901).